The primary structure comprises 220 residues: uncharacterized protein (220 aa).

Positions 194-220 (DQSQQQATKSNSKTKKLKGNHGEKTKI) are disordered. A compositionally biased stretch (polar residues) spans 195–204 (QSQQQATKSN).

This is an uncharacterized protein from Borreliella burgdorferi (strain ATCC 35210 / DSM 4680 / CIP 102532 / B31) (Borrelia burgdorferi).